The chain runs to 495 residues: Rho GTPase-activating protein 19 (495 aa).

In terms of domain architecture, Rho-GAP spans Met98 to Phe304. Disordered regions lie at residues Lys327–Gln362 and Lys393–Leu495. 3 stretches are compositionally biased toward basic and acidic residues: residues Ser350–Gln362, Gln433–Val452, and Lys470–Arg481.

Its function is as follows. GTPase activator for the Rho-type GTPases by converting them to an inactive GDP-bound state. This is Rho GTPase-activating protein 19 (ARHGAP19) from Gallus gallus (Chicken).